An 860-amino-acid chain; its full sequence is Leucine--tRNA ligase (860 aa).

The 'HIGH' region signature appears at 42-52 (PYPSGRLHMGH). Residues 619-623 (KMSKS) carry the 'KMSKS' region motif. Residue Lys-622 participates in ATP binding.

The protein belongs to the class-I aminoacyl-tRNA synthetase family.

The protein resides in the cytoplasm. The catalysed reaction is tRNA(Leu) + L-leucine + ATP = L-leucyl-tRNA(Leu) + AMP + diphosphate. The sequence is that of Leucine--tRNA ligase from Actinobacillus succinogenes (strain ATCC 55618 / DSM 22257 / CCUG 43843 / 130Z).